Reading from the N-terminus, the 230-residue chain is TorCAD operon transcriptional regulatory protein TorR (230 aa).

The Response regulatory domain occupies 4–117 (HIVIVEDEPV…ELVVRVKNLL (114 aa)). Residue aspartate 53 is modified to 4-aspartylphosphate. A DNA-binding region (ompR/PhoB-type) is located at residues 132–227 (DNCYRFAGYC…QHGEGYFLAA (96 aa)).

Post-translationally, phosphorylated and dephosphorylated by TorS.

It is found in the cytoplasm. Functionally, member of the two-component regulatory system TorS/TorR involved in the anaerobic utilization of trimethylamine-N-oxide (TMAO). Phosphorylated TorR activates the transcription of the torCAD operon by binding to four decameric boxes located in the torCAD promoter. Box1, 2 and 4 contain the DNA sequence 5'-CTGTTCATAT-3' and box3 contains the DNA sequence 5'-CCGTTCATCC-3'. Phosphorylated as well as unphosphorylated TorR negatively regulates its own expression by binding to box1 and 2. This chain is TorCAD operon transcriptional regulatory protein TorR (torR), found in Escherichia coli O157:H7.